A 514-amino-acid chain; its full sequence is Ammonium transporter 1 member 2 (514 aa).

Transmembrane regions (helical) follow at residues 56 to 76, 91 to 111, 140 to 160, 165 to 185, 212 to 232, 257 to 277, 291 to 313, 328 to 348, 351 to 371, 380 to 400, and 431 to 451; these read LLFS…LCAG, VLDA…FAFG, FFLY…GSIA, FVAY…TVSH, FAGS…GALV, VVLG…GSFL, GQWS…AALT, IDVC…CAVV, WAAI…NLLA, LEAA…TGLF, and IVQI…LFYG. At threonine 472 the chain carries Phosphothreonine.

Belongs to the ammonia transporter channel (TC 1.A.11.2) family. As to expression, high expression in root.

The protein resides in the membrane. In terms of biological role, ammonium transporter probably involved in ammonium uptake from the soil. The protein is Ammonium transporter 1 member 2 (AMT1-2) of Arabidopsis thaliana (Mouse-ear cress).